The chain runs to 29 residues: Cyclotide vibi-D (29 aa).

The cyclopeptide (Gly-Asn) cross-link spans 1-29; sequence GLPVCGETCFGGRCNTPGCTCSYPICTRN. 3 disulfides stabilise this stretch: cysteine 5/cysteine 19, cysteine 9/cysteine 21, and cysteine 14/cysteine 26.

Post-translationally, this is a cyclic peptide.

Its function is as follows. Probably participates in a plant defense mechanism. Has moderate levels of cytotoxic activity, active against a human lymphoma cell line with an IC(50) of &gt;30 uM. The polypeptide is Cyclotide vibi-D (Viola biflora (Yellow wood violet)).